Consider the following 231-residue polypeptide: Coproheme decarboxylase (231 aa).

Residue Lys44 forms an Isoglutamyl lysine isopeptide (Lys-Gln) (interchain with Q-Cter in protein Pup) linkage. Residue Tyr133 is part of the active site. His156 provides a ligand contact to Fe-coproporphyrin III.

It belongs to the ChdC family. Type 2 subfamily. Fe-coproporphyrin III serves as cofactor.

It carries out the reaction Fe-coproporphyrin III + 2 H2O2 + 2 H(+) = heme b + 2 CO2 + 4 H2O. The catalysed reaction is Fe-coproporphyrin III + H2O2 + H(+) = harderoheme III + CO2 + 2 H2O. It catalyses the reaction harderoheme III + H2O2 + H(+) = heme b + CO2 + 2 H2O. Its pathway is porphyrin-containing compound metabolism; protoheme biosynthesis. In terms of biological role, involved in coproporphyrin-dependent heme b biosynthesis. Catalyzes the decarboxylation of Fe-coproporphyrin III (coproheme) to heme b (protoheme IX), the last step of the pathway. The reaction occurs in a stepwise manner with a three-propionate intermediate. The chain is Coproheme decarboxylase from Mycolicibacterium smegmatis (strain ATCC 700084 / mc(2)155) (Mycobacterium smegmatis).